We begin with the raw amino-acid sequence, 760 residues long: Exostosin-1 (760 aa).

Over 1–6 (MQAKKR) the chain is Cytoplasmic. The chain crosses the membrane as a helical; Signal-anchor for type II membrane protein span at residues 7 to 25 (YILVFVSCAFLAYAYFGGY). Residues 26-760 (RLKVSPLRPR…KYRQIELVGS (735 aa)) lie on the Lumenal side of the membrane. N-linked (GlcNAc...) asparagine glycans are attached at residues Asn-71 and Asn-327. Arg-437 contributes to the UDP-N-acetyl-alpha-D-glucosamine binding site. N-linked (GlcNAc...) asparagine glycosylation occurs at Asn-476. Residues 540 to 560 (LGGSTRSQGAGPTSQTTEGRP) are disordered. Over residues 541 to 560 (GGSTRSQGAGPTSQTTEGRP) the composition is skewed to polar residues. UDP-N-acetyl-alpha-D-glucosamine-binding residues include Arg-565, Asp-581, Glu-582, Asp-583, Glu-669, Asp-670, and Arg-713. Asp-583 is a Mn(2+) binding site. Cysteines 668 and 716 form a disulfide. The active site involves Asp-670.

The protein belongs to the glycosyltransferase 47 family. Interacts with sau. Mn(2+) is required as a cofactor. In terms of tissue distribution, ubiquitously expressed in early embryos. Later (in stage 10 embryos), it is expressed at higher level in the nervous system. Ubiquitously expressed in wing imaginal disk.

The protein localises to the endoplasmic reticulum membrane. It localises to the golgi apparatus membrane. The enzyme catalyses 3-O-{[(1-&gt;4)-beta-D-GlcA-(1-&gt;4)-alpha-D-GlcNAc](n)-(1-&gt;4)-beta-D-GlcA-(1-&gt;3)-beta-D-Gal-(1-&gt;3)-beta-D-Gal-(1-&gt;4)-beta-D-Xyl}-L-seryl-[protein] + UDP-N-acetyl-alpha-D-glucosamine = 3-O-{alpha-D-GlcNAc-[(1-&gt;4)-beta-D-GlcA-(1-&gt;4)-alpha-D-GlcNAc](n)-(1-&gt;4)-beta-D-GlcA-(1-&gt;3)-beta-D-Gal-(1-&gt;3)-beta-D-Gal-(1-&gt;4)-beta-D-Xyl}-L-seryl-[protein] + UDP + H(+). It carries out the reaction 3-O-{alpha-D-GlcNAc-[(1-&gt;4)-beta-D-GlcA-(1-&gt;4)-alpha-D-GlcNAc](n)-(1-&gt;4)-beta-D-GlcA-(1-&gt;3)-beta-D-Gal-(1-&gt;3)-beta-D-Gal-(1-&gt;4)-beta-D-Xyl}-L-seryl-[protein] + UDP-alpha-D-glucuronate = 3-O-{[(1-&gt;4)-beta-D-GlcA-(1-&gt;4)-alpha-D-GlcNAc](n+1)-(1-&gt;4)-beta-D-GlcA-(1-&gt;3)-beta-D-Gal-(1-&gt;3)-beta-D-Gal-(1-&gt;4)-beta-D-Xyl}-L-seryl-[protein] + UDP + H(+). It participates in protein modification; protein glycosylation. Its pathway is glycan metabolism; heparan sulfate biosynthesis. The protein operates within glycan metabolism; heparin biosynthesis. Its function is as follows. Glycosyltransferase required for the biosynthesis of heparan-sulfate and responsible for the alternating addition of beta-1-4-linked glucuronic acid (GlcA) and alpha-1-4-linked N-acetylglucosamine (GlcNAc) units to nascent heparan sulfate chains. Botv is the trigger of heparan sulfate chain initiation and polymerization takes place by a complex of ttv and sotv. Plays a central role in the diffusion of morphogens hedgehog (hh), wingless (wg) and decapentaplegic (dpp) via its role in heparan sulfate proteoglycans (HSPGs) biosynthesis which are required for movement of hh, dpp and wg morphogens. This chain is Exostosin-1 (ttv), found in Drosophila melanogaster (Fruit fly).